The primary structure comprises 339 residues: 3-isopropylmalate dehydrogenase (339 aa).

The substrate site is built by R87, R97, R124, and D214. 3 residues coordinate Mg(2+): D214, D238, and D242. Residue 274 to 286 participates in NAD(+) binding; sequence GSAPDIAGQGIAD.

This sequence belongs to the isocitrate and isopropylmalate dehydrogenases family. LeuB type 2 subfamily. Homodimer. Mg(2+) serves as cofactor. The cofactor is Mn(2+).

The protein localises to the cytoplasm. The catalysed reaction is (2R,3S)-3-isopropylmalate + NAD(+) = 4-methyl-2-oxopentanoate + CO2 + NADH. Its pathway is amino-acid biosynthesis; L-leucine biosynthesis; L-leucine from 3-methyl-2-oxobutanoate: step 3/4. Catalyzes the oxidation of 3-carboxy-2-hydroxy-4-methylpentanoate (3-isopropylmalate) to 3-carboxy-4-methyl-2-oxopentanoate. The product decarboxylates to 4-methyl-2 oxopentanoate. In Mycobacterium ulcerans (strain Agy99), this protein is 3-isopropylmalate dehydrogenase.